The chain runs to 727 residues: Ankyrin repeat domain-containing protein 6 (727 aa).

ANK repeat units lie at residues Ala9 to Val38, His41 to Val70, Gly74 to Arg103, Asp107 to Ala136, Ala140 to Leu169, Ala173 to Glu202, Ala206 to Ile235, and Ala239 to Phe268. Residues Lys277–His386 form a disordered region. The segment covering Arg280–Ala296 has biased composition (basic and acidic residues). Residues Ser298–Gln312 are compositionally biased toward polar residues. Residues Val314–Phe324 are compositionally biased toward basic and acidic residues. Basic residues predominate over residues Lys363–Cys379. Residues Leu417 to Lys446 adopt a coiled-coil conformation. Positions Pro548–Pro557 are enriched in low complexity. 2 disordered regions span residues Pro548–Ser586 and Asn601–His657. The segment covering Leu566–Thr584 has biased composition (polar residues). Basic residues predominate over residues Lys622–Ala633. Residues Trp682–Asn727 are a coiled coil.

As to quaternary structure, interacts with AXN1, AXN2 and CSNK1E/CKI-epsilon.

Functionally, recruits CKI-epsilon to the beta-catenin degradation complex that consists of AXN1 or AXN2 and GSK3-beta and allows efficient phosphorylation of beta-catenin, thereby inhibiting beta-catenin/Tcf signals. This chain is Ankyrin repeat domain-containing protein 6 (ANKRD6), found in Homo sapiens (Human).